The sequence spans 244 residues: 7-cyano-7-deazaguanine synthase (244 aa).

14–24 (FSGGQDSATCV) contributes to the ATP binding site. C202, C217, C220, and C223 together coordinate Zn(2+).

The protein belongs to the QueC family. It depends on Zn(2+) as a cofactor.

The catalysed reaction is 7-carboxy-7-deazaguanine + NH4(+) + ATP = 7-cyano-7-deazaguanine + ADP + phosphate + H2O + H(+). It participates in purine metabolism; 7-cyano-7-deazaguanine biosynthesis. In terms of biological role, catalyzes the ATP-dependent conversion of 7-carboxy-7-deazaguanine (CDG) to 7-cyano-7-deazaguanine (preQ(0)). The sequence is that of 7-cyano-7-deazaguanine synthase from Burkholderia lata (strain ATCC 17760 / DSM 23089 / LMG 22485 / NCIMB 9086 / R18194 / 383).